The chain runs to 447 residues: Clusterin (447 aa).

Positions 1 to 21 (MKILLLCVALLLTWDNGMVLG) are cleaved as a signal peptide. The Nuclear localization signal signature appears at 77-80 (KKKK). Intrachain disulfides connect Cys101-Cys312, Cys112-Cys304, Cys115-Cys301, Cys120-Cys294, and Cys128-Cys284. Asn102 is a glycosylation site (N-linked (GlcNAc...) asparagine). Ser132 bears the Phosphoserine mark. Residues Asn144, Asn290, Asn327, Asn353, and Asn373 are each glycosylated (N-linked (GlcNAc...) asparagine). Phosphoserine is present on Ser394. The Nuclear localization signal signature appears at 441-445 (RRKSR).

This sequence belongs to the clusterin family. In terms of assembly, antiparallel disulfide-linked heterodimer of an alpha chain and a beta chain. Self-associates and forms higher oligomers. Interacts with a broad range of misfolded proteins, including APP, APOC2 and LYZ. Slightly acidic pH promotes interaction with misfolded proteins. Forms high-molecular weight oligomers upon interaction with misfolded proteins. Interacts with APOA1, LRP2, CLUAP1 and PON1. Interacts with the complement membrane attack complex. Interacts (via alpha chain) with XRCC6. Interacts with SYVN1, COMMD1, BTRC, CUL1 and with ubiquitin and SCF (SKP1-CUL1-F-box protein) E3 ubiquitin-protein ligase complexes. Interacts (via alpha chain) with BAX in stressed cells, where BAX undergoes a conformation change leading to association with the mitochondrial membrane. Does not interact with BAX in unstressed cells. Found in a complex with LTF, CLU, EPPIN and SEMG1. Interacts (immaturely glycosylated pre-secreted form) with HSPA5; this interaction promotes CLU stability and facilitates stress-induced CLU retrotranslocation from the secretory pathway to the mitochondria, thereby reducing stress-induced apoptosis by stabilizing mitochondrial membrane integrity. Interacts with BCL2L1; this interaction releases and activates BAX and promotes cell death. Interacts with TGFBR2 and ACVR1. Interacts (secreted form) with STMN3; this interaction may act as an important modulator during neuronal differentiation. Interacts with VLDLR and LRP8. In terms of processing, proteolytically cleaved on its way through the secretory system, probably within the Golgi lumen. Proteolytic cleavage is not necessary for its chaperone activity. All non-secreted forms are not proteolytically cleaved. Chaperone activity of uncleaved forms is dependent on a non-reducing environment. Post-translationally, polyubiquitinated, leading to proteasomal degradation. Under cellular stress, the intracellular level of cleaved form is reduced due to proteasomal degradation. Extensively glycosylated with sulfated N-linked carbohydrates. About 30% of the protein mass is comprised of complex N-linked carbohydrate. Endoplasmic reticulum (ER) stress induces changes in glycosylation status and increases level of hypoglycosylated forms. Core carbohydrates are essential for chaperone activity. Non-secreted forms are hypoglycosylated or unglycosylated. Detected in Sertoli cells (at protein level). Detected in cultured Sertoli cells, testis, epididymis, liver and brain.

Its subcellular location is the secreted. The protein resides in the nucleus. The protein localises to the cytoplasm. It localises to the mitochondrion membrane. It is found in the cytosol. Its subcellular location is the microsome. The protein resides in the endoplasmic reticulum. The protein localises to the mitochondrion. It localises to the perinuclear region. It is found in the cytoplasmic vesicle. Its subcellular location is the secretory vesicle. The protein resides in the chromaffin granule. Functions as extracellular chaperone that prevents aggregation of non native proteins. Prevents stress-induced aggregation of blood plasma proteins. Inhibits formation of amyloid fibrils by APP, APOC2, B2M, CALCA, CSN3, SNCA and aggregation-prone LYZ variants (in vitro). Does not require ATP. Maintains partially unfolded proteins in a state appropriate for subsequent refolding by other chaperones, such as HSPA8/HSC70. Does not refold proteins by itself. Binding to cell surface receptors triggers internalization of the chaperone-client complex and subsequent lysosomal or proteasomal degradation. When secreted, protects cells against apoptosis and against cytolysis by complement: inhibits assembly of the complement membrane attack complex (MAC) by preventing polymerization of C9 pore component of the MAC complex. Intracellular forms interact with ubiquitin and SCF (SKP1-CUL1-F-box protein) E3 ubiquitin-protein ligase complexes and promote the ubiquitination and subsequent proteasomal degradation of target proteins. Promotes proteasomal degradation of COMMD1 and IKBKB. Modulates NF-kappa-B transcriptional activity. Following stress, promotes apoptosis. Inhibits apoptosis when associated with the mitochondrial membrane by interference with BAX-dependent release of cytochrome c into the cytoplasm. Plays a role in the regulation of cell proliferation. An intracellular form suppresses stress-induced apoptosis by stabilizing mitochondrial membrane integrity through interaction with HSPA5. Secreted form does not affect caspase or BAX-mediated intrinsic apoptosis and TNF-induced NF-kappa-B-activity. Secreted form act as an important modulator during neuronal differentiation through interaction with STMN3. Plays a role in the clearance of immune complexes that arise during cell injury. In Rattus norvegicus (Rat), this protein is Clusterin.